We begin with the raw amino-acid sequence, 618 residues long: Delta-like protein 3 (618 aa).

The signal sequence occupies residues 1 to 26; that stretch reads MVSPRMSGLLSQTVILALIFLPQTRP. Residues 27–492 are Extracellular-facing; the sequence is AGVFELQIHS…LRPGDPQRYL (466 aa). Residues 176–215 enclose the DSL domain; sequence ARCEPPAVGTACTRLCRPRSAPSRCGPGLRPCAPLEDECE. EGF-like domains lie at 216–249, 274–310, 312–351, 353–389, 391–427, and 429–465; these read APLV…PLCT, GPGP…LRCE, SGVT…SNCE, RVDR…PRCE, DLDD…RDCR, and RADP…ARCE. Cystine bridges form between Cys-220–Cys-231, Cys-224–Cys-237, Cys-239–Cys-248, Cys-278–Cys-289, Cys-283–Cys-298, Cys-300–Cys-309, Cys-316–Cys-327, Cys-321–Cys-339, Cys-341–Cys-350, Cys-357–Cys-368, Cys-362–Cys-377, Cys-379–Cys-388, Cys-395–Cys-406, Cys-400–Cys-415, Cys-417–Cys-426, Cys-433–Cys-444, Cys-438–Cys-453, and Cys-455–Cys-464. A helical membrane pass occupies residues 493 to 513; the sequence is LPPALGLLVAAGVAGAALLLV. The Cytoplasmic segment spans residues 514–618; the sequence is HVRRRGHSQD…PYPSSILSVK (105 aa). Residues 546–562 show a composition bias toward polar residues; the sequence is NLRTQEGSGDGPSSSVD. The tract at residues 546-566 is disordered; sequence NLRTQEGSGDGPSSSVDWNRP.

In terms of assembly, can bind and activate Notch-1 or another Notch receptor. Ubiquitinated by MIB (MIB1 or MIB2), leading to its endocytosis and subsequent degradation.

Its subcellular location is the membrane. Functionally, inhibits primary neurogenesis. May be required to divert neurons along a specific differentiation pathway. Plays a role in the formation of somite boundaries during segmentation of the paraxial mesoderm. This Homo sapiens (Human) protein is Delta-like protein 3 (DLL3).